The sequence spans 150 residues: Large ribosomal subunit protein bL9 (150 aa).

This sequence belongs to the bacterial ribosomal protein bL9 family.

Functionally, binds to the 23S rRNA. The chain is Large ribosomal subunit protein bL9 from Polaromonas naphthalenivorans (strain CJ2).